Reading from the N-terminus, the 134-residue chain is Replication enhancer protein (134 aa).

The protein belongs to the geminiviridae replication enhancer protein family. As to quaternary structure, homooligomer. Interacts with the replication-associated protein (REP). Interacts with host proliferating cell nuclear antigen (PCNA). Interacts with host retinoblastoma-related protein 1 (RBR1), and may thereby deregulate the host cell cycle. Oligomerization and interaction with PCNA are necessary for optimal replication enhancement.

Increases viral DNA accumulation. Enhances infectivity and symptom expression. This is Replication enhancer protein from Tomato leaf curl virus (strain Australia) (ToLCV).